The sequence spans 639 residues: Extracellular metalloproteinase 1 (639 aa).

Residues 1 to 19 form the signal peptide; it reads MHGLLLAAGLISLPLHVLA. A propeptide spanning residues 20–250 is cleaved from the precursor; that stretch reads HPQPSSTSLA…VHNVVDYVAH (231 aa). An N-linked (GlcNAc...) asparagine glycan is attached at N291. H434 provides a ligand contact to Zn(2+). E435 is a catalytic residue. Residue H438 coordinates Zn(2+). N598 is a glycosylation site (N-linked (GlcNAc...) asparagine).

It belongs to the peptidase M36 family. Zn(2+) is required as a cofactor.

It is found in the secreted. Functionally, secreted metalloproteinase probably acting as a virulence factor. This chain is Extracellular metalloproteinase 1 (MEP1), found in Arthroderma otae (strain ATCC MYA-4605 / CBS 113480) (Microsporum canis).